The following is a 198-amino-acid chain: Na(+)-translocating NADH-quinone reductase subunit E (198 aa).

The next 6 membrane-spanning stretches (helical) occupy residues 11-31 (SIFI…FLAV), 35-55 (VSTA…AVPA), 77-97 (FLNF…LEMI), 110-130 (GIFL…SFMV), 140-160 (VVYG…LAGI), and 176-196 (LGIT…FSGI).

This sequence belongs to the NqrDE/RnfAE family. In terms of assembly, composed of six subunits; NqrA, NqrB, NqrC, NqrD, NqrE and NqrF.

It localises to the cell inner membrane. The catalysed reaction is a ubiquinone + n Na(+)(in) + NADH + H(+) = a ubiquinol + n Na(+)(out) + NAD(+). NQR complex catalyzes the reduction of ubiquinone-1 to ubiquinol by two successive reactions, coupled with the transport of Na(+) ions from the cytoplasm to the periplasm. NqrA to NqrE are probably involved in the second step, the conversion of ubisemiquinone to ubiquinol. This chain is Na(+)-translocating NADH-quinone reductase subunit E, found in Glaesserella parasuis serovar 5 (strain SH0165) (Haemophilus parasuis).